We begin with the raw amino-acid sequence, 152 residues long: Protein FERTILITY RESTORER RF2, mitochondrial (152 aa).

Residues 1-52 (MSTLVTCSLPGAVTTHASTRRFGGSQFQTSQASCISFKREVSAKAVLRSVRC) constitute a mitochondrion transit peptide. Residues 52 to 69 (CNATQTQSAQRKSSTATV) show a composition bias toward polar residues. The interval 52–101 (CNATQTQSAQRKSSTATVKRSDPKGKTQGPKLDDGSGGFPPFRFGKGGGG) is disordered.

The protein resides in the mitochondrion. Functionally, non-functional allele of the RF2 fertility restorer of rice varieties with LD-type cytoplasmic male sterility (CMS). Non-functional RF2 alleles are found in japonica cultivars Taichung 65 and Nipponbare (AC F1SZ44), and is due to the presence of Thr-78 which replaces Ile-78 in the functional allele. Functional allele is found in the japonica cultivars Fukuyama and Owarihatamochi (AC F1SZ42), and indica cultivar Kasalath (AC F1SZ41). This Oryza sativa subsp. japonica (Rice) protein is Protein FERTILITY RESTORER RF2, mitochondrial.